The following is a 373-amino-acid chain: Alpha-ketoglutarate dependent kainoid synthase (373 aa).

The region spanning 204–320 is the Fe2OG dioxygenase domain; it reads TINSKKMFFT…RSSLITFYEP (117 aa). 3 residues coordinate Fe cation: His-235, Asp-237, and His-296. Arg-311 is a 2-oxoglutarate binding site.

This sequence belongs to the iron/ascorbate-dependent oxidoreductase family. It depends on Fe(2+) as a cofactor.

The enzyme catalyses N-(7'-carboxy-7'-demethylgeranyl)-L-glutamate + 2-oxoglutarate + O2 = isodomoate A + succinate + CO2 + H2O. The catalysed reaction is N-geranyl-L-glutamate + 2-oxoglutarate + O2 = dainate A + succinate + CO2 + H2O. Its pathway is secondary metabolite biosynthesis. Its function is as follows. Iron/ascorbate-dependent oxidoreductase: part of the gene cluster that mediates the biosynthesis of domoic acid (DA) and derivatives, natural products with neurochemical activity acting as ionotropic glutamate receptor (iGluR) agonists, thus being neurotoxins causing amnesic shellfish poisoning (ASP). Catalyzes the conversion of 7'-N-carboxy-L-geranyl-L-glutamic acid (cNGG) to isodomoic acid-A. Also mediates the conversion of N-geranyl-L-glutamic acid (L-NGG) to dainic acid A. The protein is Alpha-ketoglutarate dependent kainoid synthase of Pseudo-nitzschia multiseries (Marine planktonic diatom).